The primary structure comprises 390 residues: Succinate--CoA ligase [ADP-forming] subunit beta (390 aa).

Positions Lys9–Met245 constitute an ATP-grasp domain. ATP-binding positions include Lys46, Gly53–Gly55, Glu99, Ser102, and Glu107. Positions 200 and 214 each coordinate Mg(2+). Substrate is bound by residues Asn265 and Gly322 to Val324.

This sequence belongs to the succinate/malate CoA ligase beta subunit family. As to quaternary structure, heterotetramer of two alpha and two beta subunits. Mg(2+) serves as cofactor.

It carries out the reaction succinate + ATP + CoA = succinyl-CoA + ADP + phosphate. It catalyses the reaction GTP + succinate + CoA = succinyl-CoA + GDP + phosphate. The protein operates within carbohydrate metabolism; tricarboxylic acid cycle; succinate from succinyl-CoA (ligase route): step 1/1. In terms of biological role, succinyl-CoA synthetase functions in the citric acid cycle (TCA), coupling the hydrolysis of succinyl-CoA to the synthesis of either ATP or GTP and thus represents the only step of substrate-level phosphorylation in the TCA. The beta subunit provides nucleotide specificity of the enzyme and binds the substrate succinate, while the binding sites for coenzyme A and phosphate are found in the alpha subunit. The chain is Succinate--CoA ligase [ADP-forming] subunit beta from Coxiella burnetii (strain CbuK_Q154) (Coxiella burnetii (strain Q154)).